A 157-amino-acid chain; its full sequence is MKTTLLVVGRTVEQHYITAINDYIQRTKRFITFDMEVIPELKNTKSLSMDQQKEKEGELILKALQPGDVIVLLDEHGKEMRSLEFADYMKRKMNTVNKRLVFVIGGPYGFSEKVYQVANEKISMSKMTFSHQMIRLIFVEQIYRAMTILNGGPYHHE.

Residues Leu-73, Gly-105, and 124–129 (MSKMTF) contribute to the S-adenosyl-L-methionine site.

Belongs to the RNA methyltransferase RlmH family. Homodimer.

The protein resides in the cytoplasm. The catalysed reaction is pseudouridine(1915) in 23S rRNA + S-adenosyl-L-methionine = N(3)-methylpseudouridine(1915) in 23S rRNA + S-adenosyl-L-homocysteine + H(+). Its function is as follows. Specifically methylates the pseudouridine at position 1915 (m3Psi1915) in 23S rRNA. In Bacteroides thetaiotaomicron (strain ATCC 29148 / DSM 2079 / JCM 5827 / CCUG 10774 / NCTC 10582 / VPI-5482 / E50), this protein is Ribosomal RNA large subunit methyltransferase H.